Here is a 257-residue protein sequence, read N- to C-terminus: Imidazole glycerol phosphate synthase subunit HisF (257 aa).

Residues D11 and D130 contribute to the active site.

The protein belongs to the HisA/HisF family. In terms of assembly, heterodimer of HisH and HisF.

The protein localises to the cytoplasm. The catalysed reaction is 5-[(5-phospho-1-deoxy-D-ribulos-1-ylimino)methylamino]-1-(5-phospho-beta-D-ribosyl)imidazole-4-carboxamide + L-glutamine = D-erythro-1-(imidazol-4-yl)glycerol 3-phosphate + 5-amino-1-(5-phospho-beta-D-ribosyl)imidazole-4-carboxamide + L-glutamate + H(+). It participates in amino-acid biosynthesis; L-histidine biosynthesis; L-histidine from 5-phospho-alpha-D-ribose 1-diphosphate: step 5/9. Its function is as follows. IGPS catalyzes the conversion of PRFAR and glutamine to IGP, AICAR and glutamate. The HisF subunit catalyzes the cyclization activity that produces IGP and AICAR from PRFAR using the ammonia provided by the HisH subunit. The sequence is that of Imidazole glycerol phosphate synthase subunit HisF from Aliivibrio fischeri (strain ATCC 700601 / ES114) (Vibrio fischeri).